Reading from the N-terminus, the 523-residue chain is Cyclic di-GMP binding protein BcsE (523 aa).

This sequence belongs to the BcsE family.

Functionally, required for cellulose biosynthesis. May have protease activity, but BcsA is not targeted. Binds bis-(3'-5') cyclic diguanylic acid (c-di-GMP). This is Cyclic di-GMP binding protein BcsE from Salmonella typhimurium (strain LT2 / SGSC1412 / ATCC 700720).